Consider the following 184-residue polypeptide: Large ribosomal subunit protein uL5 (184 aa).

This sequence belongs to the universal ribosomal protein uL5 family. In terms of assembly, part of the 50S ribosomal subunit; part of the 5S rRNA/L5/L18/L25 subcomplex. Contacts the 5S rRNA and the P site tRNA. Forms a bridge to the 30S subunit in the 70S ribosome.

Its function is as follows. This is one of the proteins that bind and probably mediate the attachment of the 5S RNA into the large ribosomal subunit, where it forms part of the central protuberance. In the 70S ribosome it contacts protein S13 of the 30S subunit (bridge B1b), connecting the 2 subunits; this bridge is implicated in subunit movement. Contacts the P site tRNA; the 5S rRNA and some of its associated proteins might help stabilize positioning of ribosome-bound tRNAs. In Ureaplasma parvum serovar 3 (strain ATCC 27815 / 27 / NCTC 11736), this protein is Large ribosomal subunit protein uL5.